We begin with the raw amino-acid sequence, 458 residues long: UDP-N-acetylmuramate--L-alanine ligase (458 aa).

112–118 (GTHGKTT) provides a ligand contact to ATP.

The protein belongs to the MurCDEF family.

It is found in the cytoplasm. The enzyme catalyses UDP-N-acetyl-alpha-D-muramate + L-alanine + ATP = UDP-N-acetyl-alpha-D-muramoyl-L-alanine + ADP + phosphate + H(+). Its pathway is cell wall biogenesis; peptidoglycan biosynthesis. Cell wall formation. This is UDP-N-acetylmuramate--L-alanine ligase from Syntrophotalea carbinolica (strain DSM 2380 / NBRC 103641 / GraBd1) (Pelobacter carbinolicus).